The chain runs to 300 residues: Transmembrane protein 158 (300 aa).

Positions 1 to 20 (MLPLLAALLAAACPLPPVRG) are cleaved as a signal peptide. Asn75 carries N-linked (GlcNAc...) asparagine glycosylation. 2 helical membrane passes run 231-251 (LVIV…IAGF) and 273-293 (VPAG…AAAV).

This sequence belongs to the TMEM158 family. Post-translationally, N-glycosylated.

It localises to the membrane. Functionally, receptor for brain injury-derived neurotrophic peptide (BINP), a synthetic 13-mer peptide. The polypeptide is Transmembrane protein 158 (TMEM158) (Homo sapiens (Human)).